Here is a 585-residue protein sequence, read N- to C-terminus: MAPSTPLLTVRGSEGLYMVNGPPHFTESTVFPRESGKNCKVCIFSKDGTLFAWGNGEKVNIISVTNKGLLHSFDLLKAVCLEFSPKNTVLATWQPYTTSKDGTAGIPNLQLYDVKTGTCLKSFIQKKMQNWCPSWSEDETLCARNVNNEVHFFENNNFNTIANKLHLQKINDFVLSPGPQPYKVAVYVPGSKGAPSFVRLYQYPNFAGPHAALANKSFFKADKVTMLWNKKATAVLVIASTDVDKTGASYYGEQTLHYIATNGESAVVQLPKNGPIYDVVWNSSSTEFCAVYGFMPAKATIFNLKCDPVFDFGTGPRNAAYYSPHGHILVLAGFGNLRGQMEVWDVKNYKLISKPVASDSTYFAWCPDGEHILTATCAPRLRVNNGYKIWHYTGSILHKYDVPSNAELWQVSWQPFLDGIFPAKTITYQAVPSEVPNEEPKVATAYRPPALRNKPITNSKLHEEEPPQNMKPQSGNDKPLSKTALKNQRKHEAKKAAKQEARSDKSPDLAPTPAPQSTPRNTVSQSISGDPEIDKKIKNLKKKLKAIEQLKEQAATGKQLEKNQLEKIQKETALLQELEDLELGI.

At methionine 1 the chain carries N-acetylmethionine. An N-acetylalanine; in Eukaryotic translation initiation factor 2A, N-terminally processed modification is found at alanine 2. Phosphothreonine is present on threonine 5. WD repeat units lie at residues 56 to 100 (GEKV…TTSK), 101 to 159 (DGTA…NNFN), 160 to 210 (TIAN…AGPH), 211 to 264 (AALA…TNGE), 265 to 306 (SAVV…NLKC), 307 to 348 (DPVF…DVKN), and 349 to 391 (YKLI…KIWH). Residues 434-534 (EVPNEEPKVA…QSISGDPEID (101 aa)) form a disordered region. Residues 494–507 (KKAAKQEARSDKSP) show a composition bias toward basic and acidic residues. A phosphoserine mark is found at serine 503, serine 506, and serine 517. Residues 517–528 (STPRNTVSQSIS) show a composition bias toward polar residues. Threonine 518 carries the phosphothreonine modification. The residue at position 526 (serine 526) is a Phosphoserine. A coiled-coil region spans residues 531 to 582 (PEIDKKIKNLKKKLKAIEQLKEQAATGKQLEKNQLEKIQKETALLQELEDLE).

It belongs to the WD repeat EIF2A family. In terms of tissue distribution, widely expressed. Expressed at higher level in pancreas, heart, brain and placenta.

In terms of biological role, functions in the early steps of protein synthesis of a small number of specific mRNAs. Acts by directing the binding of methionyl-tRNAi to 40S ribosomal subunits. In contrast to the eIF-2 complex, it binds methionyl-tRNAi to 40S subunits in a codon-dependent manner, whereas the eIF-2 complex binds methionyl-tRNAi to 40S subunits in a GTP-dependent manner. The protein is Eukaryotic translation initiation factor 2A (EIF2A) of Homo sapiens (Human).